The sequence spans 633 residues: Threonine--tRNA ligase (633 aa).

The TGS domain maps to 1 to 59 (MIRITFSAEQKVKEYSGKVTGFDILQPDVLKEAIAFKVNGELHDLSREIEADAEIEVIQ). Residues 240–532 (DHRKIAKDMD…LIENYAGKFP (293 aa)) form a catalytic region. The Zn(2+) site is built by cysteine 332, histidine 383, and histidine 509.

Belongs to the class-II aminoacyl-tRNA synthetase family. Homodimer. Requires Zn(2+) as cofactor.

The protein localises to the cytoplasm. It carries out the reaction tRNA(Thr) + L-threonine + ATP = L-threonyl-tRNA(Thr) + AMP + diphosphate + H(+). Functionally, catalyzes the attachment of threonine to tRNA(Thr) in a two-step reaction: L-threonine is first activated by ATP to form Thr-AMP and then transferred to the acceptor end of tRNA(Thr). Also edits incorrectly charged L-seryl-tRNA(Thr). This Wolbachia sp. subsp. Drosophila simulans (strain wRi) protein is Threonine--tRNA ligase.